The chain runs to 104 residues: L-rhamnose mutarotase (104 aa).

Tyrosine 18 contributes to the substrate binding site. Catalysis depends on histidine 22, which acts as the Proton donor. Substrate contacts are provided by residues tyrosine 41 and 76–77; that span reads WW.

It belongs to the rhamnose mutarotase family. In terms of assembly, homodimer.

The protein resides in the cytoplasm. The catalysed reaction is alpha-L-rhamnose = beta-L-rhamnose. Its pathway is carbohydrate metabolism; L-rhamnose metabolism. Functionally, involved in the anomeric conversion of L-rhamnose. This Jannaschia sp. (strain CCS1) protein is L-rhamnose mutarotase.